We begin with the raw amino-acid sequence, 743 residues long: Putative cation exchanger C3A12.06c (743 aa).

13 helical membrane-spanning segments follow: residues 13 to 33 (LILL…HRIS), 109 to 129 (FPVL…IGIS), 138 to 158 (LVTI…TFLA), 182 to 202 (IGEL…SVCL), 213 to 233 (FLRD…FVLH), 239 to 258 (IWQS…FVFF), 528 to 548 (LRLL…ITGG), 551 to 571 (LYIY…LYYY), 580 to 600 (FLPW…STIA), 609 to 629 (ALGV…FAAG), 649 to 669 (MAMG…IGIS), 690 to 710 (LSIT…YVPL), and 718 to 738 (VLGL…IVVE).

This sequence belongs to the Ca(2+):cation antiporter (CaCA) (TC 2.A.19) family.

The protein resides in the endoplasmic reticulum membrane. Functionally, putative cation exchanger. In Schizosaccharomyces pombe (strain 972 / ATCC 24843) (Fission yeast), this protein is Putative cation exchanger C3A12.06c.